We begin with the raw amino-acid sequence, 825 residues long: MAAGNAKGGFAHRNKSVPKKTDAKSLKRKRGQEDLGKLKAAIEELDPKSPAIKQFTDLPLCEATASGLRASHFEVLTDVQRAAIPLALKGRDILGAAKTGSGKTLAFLVPVLEKLYHAKWTEYDGLGALIISPTRELAVQIFEVLRKIGRNHFFSAGLVIGGKSLKEEAERLGRMNILVCTPGRMLQHLDQTANFDVNNLQILVLDEADRIMDMGFQSAVDALVEHLPTTRQTLLFSATQSKRVSDLARLSLKEPEYVSAHEAAVSATPTNLQQSYIVTPLAEKLDTLFGFLRTNLKSKIIVFFSSGKQVRFVFESFKRMQPGIPLLHLHGRQKQVARMEITSRFSSAKYGCLFATDVVARGVDFPAVDWVVQADCPEDADTYIHRVGRTARYESKGRAVLFLEPSEEAGFLKRLEQKKVPLQKVNVRENKKKSIKNELQSYNFQSPDLKYLGQKAFISYTRSIYLQKDKEVFNFNKLDLDGYAASLGLAGTPQIKYQKGDDIKRLKNASRAAISSGSESDSDDEGKPKKDKKQVRTKYEKMAERQNQDILSSHYRKLLGEDGDAAASDDDDDFLSVKRVLADDAQIDAAAGGDATNTTTTEPKVIKLGNSELIIDSNRREKLLKSKKKLLKYMDKGTKLVFDDDGVARPVYELQDEDDFAQQGPAAALRQQFVAAESEKVKEADVDDKQAAKMRRREKRERQKARERGEELERVGAGGGGGGVAMLDGGEGDEGDEDPLALLRSLPIAGEESDGGRGGGGEDEGDDGEVEPPRKKARKWFQDDSDQEEEERQKKKKGGKKVIEMAEEPENLEDLEALAAGLLED.

Residues 1–34 are disordered; that stretch reads MAAGNAKGGFAHRNKSVPKKTDAKSLKRKRGQED. Positions 19–34 are enriched in basic and acidic residues; sequence KKTDAKSLKRKRGQED. A Q motif motif is present at residues 53 to 81; sequence KQFTDLPLCEATASGLRASHFEVLTDVQR. Residues 84–258 enclose the Helicase ATP-binding domain; sequence IPLALKGRDI…RLSLKEPEYV (175 aa). 97-104 contacts ATP; sequence AKTGSGKT. The DEAD box motif lies at 206–209; the sequence is DEAD. One can recognise a Helicase C-terminal domain in the interval 284 to 439; the sequence is KLDTLFGFLR…NKKKSIKNEL (156 aa). 2 disordered regions span residues 508–536 and 676–825; these read NASR…KQVR and AESE…LLED. Basic and acidic residues-rich tracts occupy residues 677 to 691 and 700 to 714; these read ESEK…DKQA and RERQ…ELER. Composition is skewed to acidic residues over residues 730 to 739, 761 to 770, and 805 to 816; these read GEGDEGDEDP, GEDEGDDGEV, and MAEEPENLEDLE.

The protein belongs to the DEAD box helicase family. DDX10/DBP4 subfamily. In terms of assembly, interacts with the U3 and U14 snoRNAs. Associates with pre-ribosomal complexes.

Its subcellular location is the nucleus. It localises to the nucleolus. It catalyses the reaction ATP + H2O = ADP + phosphate + H(+). Its function is as follows. ATP-dependent RNA helicase required for ribosome biogenesis. Involved in the release of U14 snoRNA in pre-ribosomal complexes. Required for pre-rRNA cleavage at site A2. The sequence is that of ATP-dependent RNA helicase DBP4 (DBP4) from Chaetomium globosum (strain ATCC 6205 / CBS 148.51 / DSM 1962 / NBRC 6347 / NRRL 1970) (Soil fungus).